The sequence spans 454 residues: Mitochondrial dynamics protein MID49 (454 aa).

The Mitochondrial intermembrane portion of the chain corresponds to 1–22 (MAEFSQKQRKQSGSEGLGSVVD). The chain crosses the membrane as a helical span at residues 23-43 (FLLANARLVLGVGGAAVLGIA). Over 44-454 (TLAVKRLIDR…SGLQVPESLF (411 aa)) the chain is Cytoplasmic. The interval 76-113 (ATSPQKPQPPPAAFSQPLATGSPSPSVPVEPTPIHSPT) is disordered.

Belongs to the MID49/MID51 family. Interacts with DNM1L.

It is found in the mitochondrion outer membrane. In terms of biological role, mitochondrial outer membrane protein which regulates mitochondrial organization. It is required for mitochondrial fission and promotes the recruitment and association of the fission mediator dynamin-related protein 1 (DNM1L) to the mitochondrial surface independently of the mitochondrial fission FIS1 and MFF proteins. Regulates DNM1L GTPase activity. The sequence is that of Mitochondrial dynamics protein MID49 (Mief2) from Mus musculus (Mouse).